A 77-amino-acid polypeptide reads, in one-letter code: Translation initiation factor IF-1, chloroplastic (77 aa).

An S1-like domain is found at 1-71 (MKEQKWTHEG…TRGRIIYRLR (71 aa)).

This sequence belongs to the IF-1 family. In terms of assembly, component of the 30S ribosomal translation pre-initiation complex which assembles on the 30S ribosome in the order IF-2 and IF-3, IF-1 and N-formylmethionyl-tRNA(fMet); mRNA recruitment can occur at any time during PIC assembly.

It is found in the plastid. The protein resides in the chloroplast. Functionally, one of the essential components for the initiation of protein synthesis. Stabilizes the binding of IF-2 and IF-3 on the 30S subunit to which N-formylmethionyl-tRNA(fMet) subsequently binds. Helps modulate mRNA selection, yielding the 30S pre-initiation complex (PIC). Upon addition of the 50S ribosomal subunit IF-1, IF-2 and IF-3 are released leaving the mature 70S translation initiation complex. The protein is Translation initiation factor IF-1, chloroplastic of Coffea arabica (Arabian coffee).